The sequence spans 208 residues: High frequency lysogenization protein HflD homolog (208 aa).

It belongs to the HflD family.

The protein resides in the cytoplasm. The protein localises to the cell inner membrane. The chain is High frequency lysogenization protein HflD homolog from Yersinia pestis bv. Antiqua (strain Nepal516).